Consider the following 347-residue polypeptide: tRNA N6-adenosine threonylcarbamoyltransferase (347 aa).

Residues His111 and His115 each coordinate Fe cation. Residues 133-137 (LASGG), Asp166, Gly179, and Asn278 each bind substrate. Residue Asp306 participates in Fe cation binding.

The protein belongs to the KAE1 / TsaD family. Requires Fe(2+) as cofactor.

The protein resides in the cytoplasm. It carries out the reaction L-threonylcarbamoyladenylate + adenosine(37) in tRNA = N(6)-L-threonylcarbamoyladenosine(37) in tRNA + AMP + H(+). Its function is as follows. Required for the formation of a threonylcarbamoyl group on adenosine at position 37 (t(6)A37) in tRNAs that read codons beginning with adenine. Is involved in the transfer of the threonylcarbamoyl moiety of threonylcarbamoyl-AMP (TC-AMP) to the N6 group of A37, together with TsaE and TsaB. TsaD likely plays a direct catalytic role in this reaction. In Paramagnetospirillum magneticum (strain ATCC 700264 / AMB-1) (Magnetospirillum magneticum), this protein is tRNA N6-adenosine threonylcarbamoyltransferase.